We begin with the raw amino-acid sequence, 1076 residues long: Vacuolar membrane protease (1076 aa).

Residues 1–11 (MKCYNPSAFVP) lie on the Cytoplasmic side of the membrane. A helical transmembrane segment spans residues 12–32 (MAVTLVTVVIYLGVFIPLLII). The Vacuolar segment spans residues 33–437 (HETVPSAPDD…TVFAVFRLRT (405 aa)). Asparagine 50, asparagine 99, and asparagine 156 each carry an N-linked (GlcNAc...) asparagine glycan. Residues histidine 220 and aspartate 232 each coordinate Zn(2+). Glutamate 266 functions as the Proton acceptor in the catalytic mechanism. Glutamate 267, glutamate 292, and histidine 364 together coordinate Zn(2+). A helical membrane pass occupies residues 438 to 458 (LFAWSLTLLIASPLILFAVSY). Residues 459 to 491 (LLNRQEKFYFFAGSIKSKNPEDEPISLGGWRGA) lie on the Cytoplasmic side of the membrane. Residues 492–512 (FRFPITLFITSAITFACASLI) traverse the membrane as a helical segment. Topologically, residues 513–525 (NKINPMIIYSSPY) are vacuolar. The helical transmembrane segment at 526-546 (AVWSMSATLFFSVFWFIMAGC) threads the bilayer. Residues 547 to 556 (NFVRPSALQR) lie on the Cytoplasmic side of the membrane. Residues 557 to 577 (GYAFMWMFVFGWILLVVATVY) traverse the membrane as a helical segment. At 578–584 (EDRFKIS) the chain is on the vacuolar side. A helical transmembrane segment spans residues 585-605 (GGYLFVFYEAAIFLATLIAIC). At 606 to 738 (EQFALPRKST…LPIWTWLVQY (133 aa)) the chain is on the cytoplasmic side. 2 disordered regions span residues 619–662 (DSQN…EETV) and 701–720 (SYDGPADHDDKKGHKKHPYG). A compositionally biased stretch (basic and acidic residues) spans 621–632 (QNDHSDNQDHHH). Residues 647–660 (PNADDEAAEEDQEE) are compositionally biased toward acidic residues. Residues 739–759 (LLVGPFILVILGQVGLFLVAA) traverse the membrane as a helical segment. The Vacuolar portion of the chain corresponds to 760–771 (LHQTGTDGSPLF). A helical transmembrane segment spans residues 772-792 (LPYLIVAIFSILLLLPVTPFI). At 793–799 (HRLTHHM) the chain is on the cytoplasmic side. The chain crosses the membrane as a helical span at residues 800–820 (PTFFFLVFIGTLIYNLVAFPF). The Vacuolar portion of the chain corresponds to 821–1076 (SPNNRYKAYF…LGLAFLLAYV (256 aa)). Asparagine 912 carries an N-linked (GlcNAc...) asparagine glycan.

The protein belongs to the peptidase M28 family. Zn(2+) serves as cofactor.

The protein localises to the vacuole membrane. In terms of biological role, may be involved in vacuolar sorting and osmoregulation. This Sclerotinia sclerotiorum (strain ATCC 18683 / 1980 / Ss-1) (White mold) protein is Vacuolar membrane protease.